We begin with the raw amino-acid sequence, 406 residues long: Flavohemoprotein (406 aa).

In terms of domain architecture, Globin spans 6 to 144 (VLLDKKTTEI…IADIFISVEK (139 aa)). H91 contributes to the heme b binding site. Catalysis depends on charge relay system residues Y101 and E143. The tract at residues 155–406 (GGWTGFRDFK…LFGPLEPIAK (252 aa)) is reductase. In terms of domain architecture, FAD-binding FR-type spans 158 to 267 (TGFRDFKVIK…SAPAGDFILD (110 aa)). Residues Y196 and 212–215 (RQYS) contribute to the FAD site. Residue 280–285 (GVGLTP) coordinates NADP(+). Residue 397 to 400 (LFGP) participates in FAD binding.

The protein belongs to the globin family. Two-domain flavohemoproteins subfamily. In the C-terminal section; belongs to the flavoprotein pyridine nucleotide cytochrome reductase family. It depends on heme b as a cofactor. Requires FAD as cofactor.

The catalysed reaction is 2 nitric oxide + NADPH + 2 O2 = 2 nitrate + NADP(+) + H(+). It carries out the reaction 2 nitric oxide + NADH + 2 O2 = 2 nitrate + NAD(+) + H(+). Is involved in NO detoxification in an aerobic process, termed nitric oxide dioxygenase (NOD) reaction that utilizes O(2) and NAD(P)H to convert NO to nitrate, which protects the bacterium from various noxious nitrogen compounds. Therefore, plays a central role in the inducible response to nitrosative stress. In Oceanobacillus iheyensis (strain DSM 14371 / CIP 107618 / JCM 11309 / KCTC 3954 / HTE831), this protein is Flavohemoprotein.